A 194-amino-acid chain; its full sequence is Small ribosomal subunit protein uS4c (194 aa).

Positions 82-143 (MRLDNILFRL…KERSKVLIQN (62 aa)) constitute an S4 RNA-binding domain.

It belongs to the universal ribosomal protein uS4 family. Part of the 30S ribosomal subunit. Contacts protein S5. The interaction surface between S4 and S5 is involved in control of translational fidelity.

It is found in the plastid. The protein resides in the chloroplast. One of the primary rRNA binding proteins, it binds directly to 16S rRNA where it nucleates assembly of the body of the 30S subunit. In terms of biological role, with S5 and S12 plays an important role in translational accuracy. The protein is Small ribosomal subunit protein uS4c (rps4) of Cypella sp. (strain Porto Alegre 027).